Here is a 410-residue protein sequence, read N- to C-terminus: Peptidase T (410 aa).

H79 contributes to the Zn(2+) binding site. Residue D81 is part of the active site. D142 contributes to the Zn(2+) binding site. The Proton acceptor role is filled by E176. Residues E177, D199, and H381 each coordinate Zn(2+).

It belongs to the peptidase M20B family. Zn(2+) is required as a cofactor.

It localises to the cytoplasm. The catalysed reaction is Release of the N-terminal residue from a tripeptide.. In terms of biological role, cleaves the N-terminal amino acid of tripeptides. The chain is Peptidase T from Bacillus cereus (strain ATCC 10987 / NRS 248).